A 994-amino-acid polypeptide reads, in one-letter code: Tyrosine-protein kinase Mer (994 aa).

The first 18 residues, 1 to 18 (MVLAPLLLGLLLLPALWS), serve as a signal peptide directing secretion. Over 19–497 (GGTAEKWEET…TPAPGNTDSM (479 aa)) the chain is Extracellular. The segment at 44 to 78 (VNHRPFSAPHSSRDQLPPPQTGRSHPAHTAAPQVT) is disordered. 2 consecutive Ig-like C2-type domains span residues 75 to 181 (PQVT…EIVS) and 192 to 268 (PYFI…LTVS). Residues asparagine 91, asparagine 108, asparagine 165, asparagine 202, asparagine 210, asparagine 229, asparagine 289, asparagine 311, asparagine 324, asparagine 331, asparagine 349, asparagine 384, asparagine 390, asparagine 437, and asparagine 449 are each glycosylated (N-linked (GlcNAc...) asparagine). A disulfide bond links cysteine 109 and cysteine 170. Residues cysteine 213 and cysteine 257 are joined by a disulfide bond. Fibronectin type-III domains follow at residues 281–376 (PPTE…TTEG) and 381–478 (APLN…IPEH). A helical membrane pass occupies residues 498–518 (FIILGCFCGFILIGLILCISL). Residues 519 to 994 (ALRRRVQETK…DSLEDSEVLM (476 aa)) lie on the Cytoplasmic side of the membrane. Serine 538 carries the post-translational modification Phosphoserine. The region spanning 582–852 (LVLGKVLGEG…SVLRLQLEKL (271 aa)) is the Protein kinase domain. ATP is bound by residues 588-596 (LGEGEFGSV) and lysine 610. Aspartate 718 acts as the Proton acceptor in catalysis. Phosphotyrosine; by autocatalysis occurs at positions 744, 748, 749, and 867.

This sequence belongs to the protein kinase superfamily. Tyr protein kinase family. AXL/UFO subfamily. Interacts (upon activation) with TNK2; stimulates TNK2 autophosphorylation. Interacts (via N-terminus) with extracellular ligands LGALS3, TUB, TULP1 and GAS6. Interacts with VAV1 in a phosphotyrosine-independent manner. Interacts with TIMD4; this interaction enhances TIMD4-mediated efferocytosis. Autophosphorylated on Tyr-744, Tyr-748 and Tyr-749 in the activation loop allowing full activity. Autophosphorylated on Tyr-867 leading to recruitment of downstream partners of the signaling cascade such as PLCG2. Expressed predominantly in the hematopoietic lineages: macrophages, NK cells, NKT cells, dendritic cells and platelets.

The protein resides in the cell membrane. The catalysed reaction is L-tyrosyl-[protein] + ATP = O-phospho-L-tyrosyl-[protein] + ADP + H(+). In terms of biological role, receptor tyrosine kinase that transduces signals from the extracellular matrix into the cytoplasm by binding to several ligands including LGALS3, TUB, TULP1 or GAS6. Regulates many physiological processes including cell survival, migration, differentiation, and phagocytosis of apoptotic cells (efferocytosis). Ligand binding at the cell surface induces autophosphorylation of MERTK on its intracellular domain that provides docking sites for downstream signaling molecules. Following activation by ligand, interacts with GRB2 or PLCG2 and induces phosphorylation of MAPK1, MAPK2, FAK/PTK2 or RAC1. MERTK signaling plays a role in various processes such as macrophage clearance of apoptotic cells, platelet aggregation, cytoskeleton reorganization and engulfment. Functions in the retinal pigment epithelium (RPE) as a regulator of rod outer segments fragments phagocytosis. Also plays an important role in inhibition of Toll-like receptors (TLRs)-mediated innate immune response by activating STAT1, which selectively induces production of suppressors of cytokine signaling SOCS1 and SOCS3. This chain is Tyrosine-protein kinase Mer (Mertk), found in Mus musculus (Mouse).